The following is a 344-amino-acid chain: Heme A synthase (344 aa).

9 helical membrane passes run 20-40 (IAWW…VGGL), 104-124 (RFLG…FVVT), 135-155 (LIFL…MVMS), 170-190 (AHLG…LDLL), 205-225 (AAAI…VAGI), 233-253 (TWPL…TPVW), 265-285 (FQHR…WWAA), 296-316 (WLAV…LWVV), and 317-337 (PIPL…VAVW). His267 contacts heme. Residue His324 participates in heme binding.

It belongs to the COX15/CtaA family. Type 2 subfamily. In terms of assembly, interacts with CtaB. Heme b is required as a cofactor.

The protein localises to the cell membrane. It catalyses the reaction Fe(II)-heme o + 2 A + H2O = Fe(II)-heme a + 2 AH2. Its pathway is porphyrin-containing compound metabolism; heme A biosynthesis; heme A from heme O: step 1/1. Its function is as follows. Catalyzes the conversion of heme O to heme A by two successive hydroxylations of the methyl group at C8. The first hydroxylation forms heme I, the second hydroxylation results in an unstable dihydroxymethyl group, which spontaneously dehydrates, resulting in the formyl group of heme A. The polypeptide is Heme A synthase (Parvibaculum lavamentivorans (strain DS-1 / DSM 13023 / NCIMB 13966)).